The chain runs to 444 residues: ATP-dependent protease ATPase subunit HslU (444 aa).

ATP contacts are provided by residues Ile18, Gly60–Glu65, Asp256, Glu322, and Arg394.

The protein belongs to the ClpX chaperone family. HslU subfamily. In terms of assembly, a double ring-shaped homohexamer of HslV is capped on each side by a ring-shaped HslU homohexamer. The assembly of the HslU/HslV complex is dependent on binding of ATP.

The protein localises to the cytoplasm. In terms of biological role, ATPase subunit of a proteasome-like degradation complex; this subunit has chaperone activity. The binding of ATP and its subsequent hydrolysis by HslU are essential for unfolding of protein substrates subsequently hydrolyzed by HslV. HslU recognizes the N-terminal part of its protein substrates and unfolds these before they are guided to HslV for hydrolysis. This is ATP-dependent protease ATPase subunit HslU from Klebsiella pneumoniae subsp. pneumoniae (strain ATCC 700721 / MGH 78578).